The chain runs to 341 residues: S-adenosylmethionine:tRNA ribosyltransferase-isomerase (341 aa).

The protein belongs to the QueA family. In terms of assembly, monomer.

It localises to the cytoplasm. It carries out the reaction 7-aminomethyl-7-carbaguanosine(34) in tRNA + S-adenosyl-L-methionine = epoxyqueuosine(34) in tRNA + adenine + L-methionine + 2 H(+). It functions in the pathway tRNA modification; tRNA-queuosine biosynthesis. Its function is as follows. Transfers and isomerizes the ribose moiety from AdoMet to the 7-aminomethyl group of 7-deazaguanine (preQ1-tRNA) to give epoxyqueuosine (oQ-tRNA). This chain is S-adenosylmethionine:tRNA ribosyltransferase-isomerase, found in Staphylococcus aureus (strain USA300).